The following is a 259-amino-acid chain: Isoepoxydon dehydrogenase patN (259 aa).

Residues Asn-96 and Arg-125 each coordinate NADP(+). Active-site proton donor residues include Ser-143 and Ser-144. The NADP(+) site is built by Tyr-158, Lys-162, and Ile-191. Residue Tyr-158 is the Proton acceptor of the active site. The Lowers pKa of active site Tyr role is filled by Lys-162.

Belongs to the short-chain dehydrogenases/reductases (SDR) family.

It localises to the cytoplasm. The protein localises to the cytosol. It catalyses the reaction isoepoxydon + NADP(+) = phyllostine + NADPH + H(+). It functions in the pathway mycotoxin biosynthesis; patulin biosynthesis. In terms of biological role, isoepoxydon dehydrogenase; part of the gene cluster that mediates the biosynthesis of patulin, an acetate-derived tetraketide mycotoxin produced by several fungal species that shows antimicrobial properties against several bacteria. PatN catalyzes the conversion of isoepoxydon into phyllostine. The pathway begins with the synthesis of 6-methylsalicylic acid by the polyketide synthase (PKS) patK via condensation of acetate and malonate units. The 6-methylsalicylic acid decarboxylase patG then catalyzes the decarboxylation of 6-methylsalicylic acid to yield m-cresol (also known as 3-methylphenol). These first reactions occur in the cytosol. The intermediate m-cresol is then transported into the endoplasmic reticulum where the cytochrome P450 monooxygenase patH converts it to m-hydroxybenzyl alcohol, which is further converted to gentisyl alcohol by the cytochrome P450 monooxygenase patI. The oxidoreductases patJ and patO further convert gentisyl alcohol to isoepoxydon in the vacuole. PatN catalyzes then the transformation of isoepoxydon into phyllostine. The cluster protein patF is responsible for the conversion from phyllostine to neopatulin whereas the alcohol dehydrogenase patD converts neopatulin to E-ascladiol. The steps between isoepoxydon and E-ascladiol occur in the cytosol, and E-ascladiol is probably secreted to the extracellular space by one of the cluster-specific transporters patC or patM. Finally, the secreted patulin synthase patE catalyzes the conversion of E-ascladiol to patulin. In Aspergillus clavatus (strain ATCC 1007 / CBS 513.65 / DSM 816 / NCTC 3887 / NRRL 1 / QM 1276 / 107), this protein is Isoepoxydon dehydrogenase patN.